The chain runs to 431 residues: Nuclear envelope integral membrane protein 1 (431 aa).

Residues Met1–Cys29 form the signal peptide. 5 helical membrane passes run Pro151 to Ser171, Ile175 to Phe195, Pro206 to Phe226, Tyr236 to Tyr256, and Ser266 to Val286. The tract at residues Phe176–Gln287 is a; required for its colocalization with lamins at the nuclear envelope. The Nuclear localization signal motif lies at Arg317–Lys325. The b; required for interaction with ran stretch occupies residues Pro326–Glu395. The interval Pro326–Arg431 is interaction with banf1-a and banf1-b. Residues Ser368–Arg375 form a BAF-binding site (BBS); essential for interaction with banf1-a, banf1-b and ran region.

This sequence belongs to the NEMP family. In terms of assembly, homooligomer. Interacts with banf1-a and banf1-b. Interacts with ran-gtp. Post-translationally, phosphorylated.

Its subcellular location is the nucleus inner membrane. It is found in the nucleus envelope. In terms of biological role, in concert with ran, required for proper eye development. May be involved in the expression of early eye marker genes. Contributes to nuclear envelope stiffness in germ cells. Required for fertility. Essential for normal erythropoiesis. Required for efficient nuclear envelope opening and enucleation during the late stages of erythroblast maturation. The chain is Nuclear envelope integral membrane protein 1 (nemp1) from Xenopus tropicalis (Western clawed frog).